Reading from the N-terminus, the 851-residue chain is Alanine--tRNA ligase (851 aa).

Residues His554, His558, Cys656, and His660 each coordinate Zn(2+).

Belongs to the class-II aminoacyl-tRNA synthetase family. The cofactor is Zn(2+).

It localises to the cytoplasm. It carries out the reaction tRNA(Ala) + L-alanine + ATP = L-alanyl-tRNA(Ala) + AMP + diphosphate. Its function is as follows. Catalyzes the attachment of alanine to tRNA(Ala) in a two-step reaction: alanine is first activated by ATP to form Ala-AMP and then transferred to the acceptor end of tRNA(Ala). Also edits incorrectly charged Ser-tRNA(Ala) and Gly-tRNA(Ala) via its editing domain. In Aliarcobacter butzleri (strain RM4018) (Arcobacter butzleri), this protein is Alanine--tRNA ligase.